The primary structure comprises 222 residues: Glutathione S-transferase A4 (222 aa).

An N-acetylmethionine modification is found at methionine 1. The GST N-terminal domain maps to 3 to 83 (AKPKLYYFNG…YLAAKYNLYG (81 aa)). Glutathione is bound by residues tyrosine 9, 53–55 (GQV), and 66–68 (TQT). Positions 85–208 (DLKERVRIDM…QPGSQRKPPP (124 aa)) constitute a GST C-terminal domain.

Belongs to the GST superfamily. Alpha family. In terms of assembly, homodimer. Post-translationally, the N-terminus is blocked.

Its subcellular location is the cytoplasm. It carries out the reaction RX + glutathione = an S-substituted glutathione + a halide anion + H(+). Conjugation of reduced glutathione to a wide number of exogenous and endogenous hydrophobic electrophiles. This chain is Glutathione S-transferase A4 (Gsta4), found in Mus musculus (Mouse).